Here is a 407-residue protein sequence, read N- to C-terminus: Keratin, type I cuticular Ha2 (407 aa).

Residues M1–E55 are head. The IF rod domain maps to E55–L366. Positions K56–V90 are coil 1A. Residues Y91–D101 form a linker 1 region. The coil 1B stretch occupies residues Y102 to Q202. Residues Q203–V218 form a linker 12 region. Positions D219–E362 are coil 2. The segment at D363–Y407 is tail.

This sequence belongs to the intermediate filament family. In terms of tissue distribution, cuticle of the hair shaft.

This is Keratin, type I cuticular Ha2 (Krt32) from Mus musculus (Mouse).